Here is a 128-residue protein sequence, read N- to C-terminus: Ribonuclease P protein component (128 aa).

This sequence belongs to the RnpA family. In terms of assembly, consists of a catalytic RNA component (M1 or rnpB) and a protein subunit.

The catalysed reaction is Endonucleolytic cleavage of RNA, removing 5'-extranucleotides from tRNA precursor.. Its function is as follows. RNaseP catalyzes the removal of the 5'-leader sequence from pre-tRNA to produce the mature 5'-terminus. It can also cleave other RNA substrates such as 4.5S RNA. The protein component plays an auxiliary but essential role in vivo by binding to the 5'-leader sequence and broadening the substrate specificity of the ribozyme. This Prochlorococcus marinus (strain MIT 9313) protein is Ribonuclease P protein component.